We begin with the raw amino-acid sequence, 661 residues long: NUAK family SNF1-like kinase 1 (661 aa).

Position 1 is an N-acetylmethionine (Met-1). Positions 1–24 (MEGAAAPVAGDRPDLGLGAPGSPR) are disordered. Position 22 is a phosphoserine (Ser-22). The region spanning 55 to 306 (YELQETLGKG…IEDIANHWWV (252 aa)) is the Protein kinase domain. Residues 61 to 69 (LGKGTYGKV) and Lys-84 contribute to the ATP site. Catalysis depends on Asp-178, which acts as the Proton acceptor. Residue Thr-211 is modified to Phosphothreonine; by LKB1. Disordered stretches follow at residues 345 to 421 (TEAK…EGVV) and 442 to 570 (LPSS…RPSS). Residues 393–404 (SSKRPKGILKKR) show a composition bias toward basic residues. Residues 399–402 (GILK) carry the GILK motif motif. At Ser-455 the chain carries Phosphoserine. Residues 518 to 529 (SCRRKGILKHSS) show a composition bias toward basic residues. Ser-600 carries the post-translational modification Phosphoserine; by PKB/AKT1.

Belongs to the protein kinase superfamily. CAMK Ser/Thr protein kinase family. SNF1 subfamily. Interacts (via GILK motif) with PPP1CB; the interaction is direct and bridges NUAK1 and PPP1R12A. Interacts with CDKN1A. Mg(2+) is required as a cofactor. In terms of processing, ubiquitinated with 'Lys-29'- and 'Lys-33'-linked polyubiquitins which appear to impede LKB1-mediated phosphorylation. Deubiquitinated by USP9X. Post-translationally, phosphorylated at Thr-211 by STK11/LKB1 in complex with STE20-related adapter-alpha (STRADA) pseudo kinase and CAB39. Not dephosphorylated by the myosin PP1 complex when regulating its activity, due to the presence of PPP1R12A, which prevents myosin PP1 from dephosphorylating NUAK1. Phosphorylated by STK38L upon stimulation with IGF1. As to expression, expressed at high levels in heart and brain, and at lower levels in skeletal muscle, kidney, ovary, placenta, lung and liver. Highly up-regulated in colorectal cancer cell lines.

It is found in the nucleus. The protein resides in the cytoplasm. The enzyme catalyses L-seryl-[protein] + ATP = O-phospho-L-seryl-[protein] + ADP + H(+). It catalyses the reaction L-threonyl-[protein] + ATP = O-phospho-L-threonyl-[protein] + ADP + H(+). Its activity is regulated as follows. Activated by phosphorylation on Thr-211. Activated by phosphorylation at Ser-600 AKT1 during glucose starvation; the relevance of such activation in normal cells is however unsure. Its function is as follows. Serine/threonine-protein kinase involved in various processes such as cell adhesion, regulation of cell ploidy and senescence, cell proliferation and tumor progression. Phosphorylates ATM, CASP6, LATS1, PPP1R12A and p53/TP53. Acts as a regulator of cellular senescence and cellular ploidy by mediating phosphorylation of 'Ser-464' of LATS1, thereby controlling its stability. Controls cell adhesion by regulating activity of the myosin protein phosphatase 1 (PP1) complex. Acts by mediating phosphorylation of PPP1R12A subunit of myosin PP1: phosphorylated PPP1R12A then interacts with 14-3-3, leading to reduced dephosphorylation of myosin MLC2 by myosin PP1. May be involved in DNA damage response: phosphorylates p53/TP53 at 'Ser-15' and 'Ser-392' and is recruited to the CDKN1A/WAF1 promoter to participate in transcription activation by p53/TP53. May also act as a tumor malignancy-associated factor by promoting tumor invasion and metastasis under regulation and phosphorylation by AKT1. Suppresses Fas-induced apoptosis by mediating phosphorylation of CASP6, thereby suppressing the activation of the caspase and the subsequent cleavage of CFLAR. Regulates UV radiation-induced DNA damage response mediated by CDKN1A. In association with STK11, phosphorylates CDKN1A in response to UV radiation and contributes to its degradation which is necessary for optimal DNA repair. The protein is NUAK family SNF1-like kinase 1 (NUAK1) of Homo sapiens (Human).